Reading from the N-terminus, the 548-residue chain is Eukaryotic translation initiation factor 3 subunit D (548 aa).

K53 carries the post-translational modification N6-acetyllysine. S161 is subject to Phosphoserine. The interval 285-299 (DFDLLTVSETANEPP) is RNA gate. Residues 523–548 (PDGTFSSDEDEEEEEEEEEEEEEEET) are disordered. Phosphoserine occurs at positions 528 and 529. A compositionally biased stretch (acidic residues) spans 529-548 (SDEDEEEEEEEEEEEEEEET).

This sequence belongs to the eIF-3 subunit D family. As to quaternary structure, component of the eukaryotic translation initiation factor 3 (eIF-3) complex, which is composed of 13 subunits: EIF3A, EIF3B, EIF3C, EIF3D, EIF3E, EIF3F, EIF3G, EIF3H, EIF3I, EIF3J, EIF3K, EIF3L and EIF3M. The eIF-3 complex appears to include 3 stable modules: module A is composed of EIF3A, EIF3B, EIF3G and EIF3I; module B is composed of EIF3F, EIF3H, and EIF3M; and module C is composed of EIF3C, EIF3D, EIF3E, EIF3K and EIF3L. EIF3C of module C binds EIF3B of module A and EIF3H of module B, thereby linking the three modules. EIF3J is a labile subunit that binds to the eIF-3 complex via EIF3B. The eIF-3 complex interacts with RPS6KB1 under conditions of nutrient depletion. Mitogenic stimulation leads to binding and activation of a complex composed of MTOR and RPTOR, leading to phosphorylation and release of RPS6KB1 and binding of EIF4B to eIF-3.

The protein resides in the cytoplasm. In terms of biological role, mRNA cap-binding component of the eukaryotic translation initiation factor 3 (eIF-3) complex, a complex required for several steps in the initiation of protein synthesis of a specialized repertoire of mRNAs. The eIF-3 complex associates with the 40S ribosome and facilitates the recruitment of eIF-1, eIF-1A, eIF-2:GTP:methionyl-tRNAi and eIF-5 to form the 43S pre-initiation complex (43S PIC). The eIF-3 complex stimulates mRNA recruitment to the 43S PIC and scanning of the mRNA for AUG recognition. The eIF-3 complex is also required for disassembly and recycling of post-termination ribosomal complexes and subsequently prevents premature joining of the 40S and 60S ribosomal subunits prior to initiation. The eIF-3 complex specifically targets and initiates translation of a subset of mRNAs involved in cell proliferation, including cell cycling, differentiation and apoptosis, and uses different modes of RNA stem-loop binding to exert either translational activation or repression. In the eIF-3 complex, EIF3D specifically recognizes and binds the 7-methylguanosine cap of a subset of mRNAs. The polypeptide is Eukaryotic translation initiation factor 3 subunit D (Macaca fascicularis (Crab-eating macaque)).